A 257-amino-acid polypeptide reads, in one-letter code: Glutamate racemase (257 aa).

Substrate-binding positions include 12-13 (DS) and 44-45 (YG). Cys-75 (proton donor/acceptor) is an active-site residue. Residue 76-77 (NT) coordinates substrate. Residue Cys-185 is the Proton donor/acceptor of the active site. Residue 186–187 (TH) coordinates substrate.

Belongs to the aspartate/glutamate racemases family.

The enzyme catalyses L-glutamate = D-glutamate. It functions in the pathway cell wall biogenesis; peptidoglycan biosynthesis. Provides the (R)-glutamate required for cell wall biosynthesis. In Clostridium botulinum (strain ATCC 19397 / Type A), this protein is Glutamate racemase.